The following is a 349-amino-acid chain: Small ribosomal subunit protein uS2 (349 aa).

The disordered stretch occupies residues 302–334 (QNNYDPSKRGYNPKYVNHKSTFNKFNNKKPVDS).

It belongs to the universal ribosomal protein uS2 family.

In Ureaplasma parvum serovar 3 (strain ATCC 27815 / 27 / NCTC 11736), this protein is Small ribosomal subunit protein uS2.